We begin with the raw amino-acid sequence, 980 residues long: Exportin-T (980 aa).

This sequence belongs to the exportin family. Expressed in roots, stems, leaves, flowers and embryos.

It is found in the nucleus. It localises to the cytoplasm. In terms of biological role, probable tRNA nucleus export receptor which regulates tRNA processing and facilitates tRNA translocation across the nuclear pore complex. Is required for correct leaf initiation at different developmental stages and may play a role in floral patterning. In Oryza sativa subsp. japonica (Rice), this protein is Exportin-T.